A 1822-amino-acid polypeptide reads, in one-letter code: ADP-ribosylation factor guanine nucleotide-exchange factor sec72 (1822 aa).

Disordered regions lie at residues 1-54 (MQDA…NGMD) and 66-126 (DAVV…RASL). The residue at position 44 (Ser-44) is a Phosphoserine. The span at 72-84 (DINTEDSSLSPAK) shows a compositional bias: polar residues. The segment covering 85–110 (QENEKSPEGIEQKYQEEDLKDDKKSN) has biased composition (basic and acidic residues). Residues Ser-122 and Ser-125 each carry the phosphoserine modification. The short motif at 547-551 (NYDCD) is the HUS box element. Thr-597 is modified (phosphothreonine). Ser-653 is subject to Phosphoserine. Position 654 is a phosphothreonine (Thr-654). Ser-669 is subject to Phosphoserine. The region spanning 701–889 (QFESNKQRKK…GFVYDDILKN (189 aa)) is the SEC7 domain. The interval 898 to 1106 (ELAAIAPLMN…NARVRRKNVN (209 aa)) is HDS1 domain. At Ser-1110 the chain carries Phosphoserine. 2 disordered regions span residues 1111-1131 (NSIR…SLSK) and 1584-1610 (ENEN…TSSI). Composition is skewed to low complexity over residues 1117-1130 (SGST…RSLS) and 1597-1610 (SLPE…TSSI). Phosphoserine is present on residues Ser-1606 and Ser-1609.

It localises to the cytoplasm. Its subcellular location is the golgi apparatus. It is found in the trans-Golgi network. The protein localises to the cytoplasmic vesicle. The protein resides in the COPI-coated vesicle membrane. It localises to the COPII-coated vesicle membrane. Its function is as follows. Guanine exchange factor that acts as an activator of arf1 at the trans-Golgi net-work and is thus involved in vesicular budding and traffic between compartments of the Golgi apparatus. Activation of Arf (ADP-ribosylation factor) GTPases is essential for vesicle formation via recruitment of cargo adapters and coat proteins necessary for Golgi trafficking. Involved in the resistance to tamoxifen (TAM), an anticancer drug used to treat estrogen receptor (ER)-positive breast cancer. This chain is ADP-ribosylation factor guanine nucleotide-exchange factor sec72, found in Schizosaccharomyces pombe (strain 972 / ATCC 24843) (Fission yeast).